The chain runs to 343 residues: Acetylglutamate kinase (343 aa).

Substrate contacts are provided by residues 98-99, R120, and N219; that span reads GG.

This sequence belongs to the acetylglutamate kinase family. ArgB subfamily.

Its subcellular location is the cytoplasm. The catalysed reaction is N-acetyl-L-glutamate + ATP = N-acetyl-L-glutamyl 5-phosphate + ADP. It functions in the pathway amino-acid biosynthesis; L-arginine biosynthesis; N(2)-acetyl-L-ornithine from L-glutamate: step 2/4. Functionally, catalyzes the ATP-dependent phosphorylation of N-acetyl-L-glutamate. This is Acetylglutamate kinase from Frankia alni (strain DSM 45986 / CECT 9034 / ACN14a).